Reading from the N-terminus, the 304-residue chain is UDP-N-acetylenolpyruvoylglucosamine reductase (304 aa).

Residues 33-213 form the FAD-binding PCMH-type domain; it reads IGGPADIMVI…LEITRDLTER (181 aa). The active site involves Arg177. The active-site Proton donor is the Ser227. The active site involves Glu297.

It belongs to the MurB family. Requires FAD as cofactor.

It is found in the cytoplasm. The catalysed reaction is UDP-N-acetyl-alpha-D-muramate + NADP(+) = UDP-N-acetyl-3-O-(1-carboxyvinyl)-alpha-D-glucosamine + NADPH + H(+). The protein operates within cell wall biogenesis; peptidoglycan biosynthesis. In terms of biological role, cell wall formation. The chain is UDP-N-acetylenolpyruvoylglucosamine reductase from Alkaliphilus oremlandii (strain OhILAs) (Clostridium oremlandii (strain OhILAs)).